A 78-amino-acid polypeptide reads, in one-letter code: Protein SlyX homolog (78 aa).

Belongs to the SlyX family.

The chain is Protein SlyX homolog from Xylella fastidiosa (strain M23).